The following is a 333-amino-acid chain: Phosphate acyltransferase (333 aa).

Belongs to the PlsX family. As to quaternary structure, homodimer. Probably interacts with PlsY.

Its subcellular location is the cytoplasm. The catalysed reaction is a fatty acyl-[ACP] + phosphate = an acyl phosphate + holo-[ACP]. Its pathway is lipid metabolism; phospholipid metabolism. Functionally, catalyzes the reversible formation of acyl-phosphate (acyl-PO(4)) from acyl-[acyl-carrier-protein] (acyl-ACP). This enzyme utilizes acyl-ACP as fatty acyl donor, but not acyl-CoA. The sequence is that of Phosphate acyltransferase from Thermoanaerobacterium thermosaccharolyticum (strain ATCC 7956 / DSM 571 / NCIMB 9385 / NCA 3814 / NCTC 13789 / WDCM 00135 / 2032) (Clostridium thermosaccharolyticum).